Here is a 291-residue protein sequence, read N- to C-terminus: Nucleotide-binding protein lin2617 (291 aa).

An ATP-binding site is contributed by 13–20 (GMSGAGKT). 63–66 (DLRG) lines the GTP pocket.

The protein belongs to the RapZ-like family.

In terms of biological role, displays ATPase and GTPase activities. In Listeria innocua serovar 6a (strain ATCC BAA-680 / CLIP 11262), this protein is Nucleotide-binding protein lin2617.